The primary structure comprises 180 residues: Small ribosomal subunit protein uS4 (180 aa).

Residues 102–174 (RRLQTMLVRK…PARKLEQKEE (73 aa)) form the S4 RNA-binding domain. Positions 154 to 180 (VPFSPLANPEHPARKLEQKEETNEESA) are disordered. Basic and acidic residues predominate over residues 164 to 174 (HPARKLEQKEE).

Belongs to the universal ribosomal protein uS4 family. Part of the 30S ribosomal subunit. Contacts protein S5. The interaction surface between S4 and S5 is involved in control of translational fidelity.

In terms of biological role, one of the primary rRNA binding proteins, it binds directly to 16S rRNA where it nucleates assembly of the body of the 30S subunit. With S5 and S12 plays an important role in translational accuracy. This Nanoarchaeum equitans (strain Kin4-M) protein is Small ribosomal subunit protein uS4.